A 274-amino-acid chain; its full sequence is Triosephosphate isomerase (274 aa).

31-33 (NWK) provides a ligand contact to substrate. The active-site Electrophile is His118. The Proton acceptor role is filled by Glu188. Substrate is bound by residues Gly194, Ser234, and 255–256 (GG).

The protein belongs to the triosephosphate isomerase family. In terms of assembly, homodimer.

It localises to the cytoplasm. The enzyme catalyses D-glyceraldehyde 3-phosphate = dihydroxyacetone phosphate. Its pathway is carbohydrate biosynthesis; gluconeogenesis. The protein operates within carbohydrate degradation; glycolysis; D-glyceraldehyde 3-phosphate from glycerone phosphate: step 1/1. Its function is as follows. Involved in the gluconeogenesis. Catalyzes stereospecifically the conversion of dihydroxyacetone phosphate (DHAP) to D-glyceraldehyde-3-phosphate (G3P). The sequence is that of Triosephosphate isomerase from Chlamydia trachomatis serovar L2 (strain ATCC VR-902B / DSM 19102 / 434/Bu).